The sequence spans 780 residues: Translation initiation factor IF-2 (780 aa).

Residues 44-194 (RQLDNAVDGT…TPPKPKELPE (151 aa)) are disordered. Residues 53-65 (TNKKAEAPKKETT) show a composition bias toward basic and acidic residues. Residues 66-81 (SNENGNSKGPNKPNMT) are compositionally biased toward polar residues. 2 stretches are compositionally biased toward low complexity: residues 82-93 (NSNEKSNKPNKP) and 117-168 (ANTS…NNKG). A tr-type G domain is found at 281-450 (ERPPVVTIMG…LLVSEVEELK (170 aa)). The segment at 290 to 297 (GHVDHGKT) is G1. 290–297 (GHVDHGKT) is a binding site for GTP. Residues 315–319 (GITQH) are G2. The G3 stretch occupies residues 336 to 339 (DTPG). GTP contacts are provided by residues 336–340 (DTPGH) and 390–393 (NKID). The segment at 390-393 (NKID) is G4. A G5 region spans residues 426–428 (SAK).

The protein belongs to the TRAFAC class translation factor GTPase superfamily. Classic translation factor GTPase family. IF-2 subfamily.

Its subcellular location is the cytoplasm. One of the essential components for the initiation of protein synthesis. Protects formylmethionyl-tRNA from spontaneous hydrolysis and promotes its binding to the 30S ribosomal subunits. Also involved in the hydrolysis of GTP during the formation of the 70S ribosomal complex. This is Translation initiation factor IF-2 from Listeria welshimeri serovar 6b (strain ATCC 35897 / DSM 20650 / CCUG 15529 / CIP 8149 / NCTC 11857 / SLCC 5334 / V8).